A 273-amino-acid chain; its full sequence is Bis(5'-nucleosyl)-tetraphosphatase, symmetrical (273 aa).

It belongs to the Ap4A hydrolase family.

The catalysed reaction is P(1),P(4)-bis(5'-adenosyl) tetraphosphate + H2O = 2 ADP + 2 H(+). Hydrolyzes diadenosine 5',5'''-P1,P4-tetraphosphate to yield ADP. This is Bis(5'-nucleosyl)-tetraphosphatase, symmetrical from Aeromonas hydrophila subsp. hydrophila (strain ATCC 7966 / DSM 30187 / BCRC 13018 / CCUG 14551 / JCM 1027 / KCTC 2358 / NCIMB 9240 / NCTC 8049).